The sequence spans 346 residues: Phosphoribosylformylglycinamidine cyclo-ligase (346 aa).

It belongs to the AIR synthase family.

The protein resides in the cytoplasm. It catalyses the reaction 2-formamido-N(1)-(5-O-phospho-beta-D-ribosyl)acetamidine + ATP = 5-amino-1-(5-phospho-beta-D-ribosyl)imidazole + ADP + phosphate + H(+). It participates in purine metabolism; IMP biosynthesis via de novo pathway; 5-amino-1-(5-phospho-D-ribosyl)imidazole from N(2)-formyl-N(1)-(5-phospho-D-ribosyl)glycinamide: step 2/2. This chain is Phosphoribosylformylglycinamidine cyclo-ligase, found in Proteus mirabilis (strain HI4320).